The sequence spans 1146 residues: Nucleolar protein 6 (1146 aa).

The disordered stretch occupies residues 1–48; that stretch reads MGPAPAGEQLRGATGEPEVMEPALEGTGKEGKKASSRKRTLAEPPAKG. Serine 56 bears the Phosphoserine mark. Residues 83–114 adopt a coiled-coil conformation; sequence LLRLQVEELLKEVRLSEKKKDRIDAFLREVNQ. Serine 283, serine 289, and serine 811 each carry phosphoserine.

This sequence belongs to the NRAP family. Part of the small subunit (SSU) processome, composed of more than 70 proteins and the RNA chaperone small nucleolar RNA (snoRNA) U3. Interacts with RRP7A; required for NOL6 localization to nucleolus.

The protein resides in the nucleus. Its subcellular location is the nucleolus. The protein localises to the chromosome. In terms of biological role, part of the small subunit (SSU) processome, first precursor of the small eukaryotic ribosomal subunit. During the assembly of the SSU processome in the nucleolus, many ribosome biogenesis factors, an RNA chaperone and ribosomal proteins associate with the nascent pre-rRNA and work in concert to generate RNA folding, modifications, rearrangements and cleavage as well as targeted degradation of pre-ribosomal RNA by the RNA exosome. In Homo sapiens (Human), this protein is Nucleolar protein 6.